The sequence spans 356 residues: CX3C chemokine receptor 1 (356 aa).

Residues 1–26 lie on the Extracellular side of the membrane; it reads MTTLYSDWATESFEYDESSEACFIGD. The helical transmembrane segment at 27 to 47 threads the bilayer; it reads IVAFGTIFLSIFYSLVFAFGL. At 48-68 the chain is on the cytoplasmic side; that stretch reads VGNLLVVCALTSSRKPKSITD. A helical membrane pass occupies residues 69-89; sequence IYLLNLALSDLLFVATLPFWT. Topologically, residues 90 to 105 are extracellular; that stretch reads HYVISEQGFHNAVCKL. Residues cysteine 103 and cysteine 176 are joined by a disulfide bond. The helical transmembrane segment at 106–126 threads the bilayer; it reads TTALFFIGFFGGIFFITVISI. Residues 127-147 are Cytoplasmic-facing; that stretch reads DRYMAIVLAANSINNRTVQHG. Residues 148 to 168 traverse the membrane as a helical segment; the sequence is VTTSLGVWAAAILVAAPQFMF. The Extracellular segment spans residues 169–195; that stretch reads TKQKGNECLGDYPEVLQDIWPVLRNTE. A helical membrane pass occupies residues 196–216; sequence ANFLGFLLPVLIMSYCYFRII. Over 217–232 the chain is Cytoplasmic; that stretch reads QTLFSCKNHKKAKAIK. A helical membrane pass occupies residues 233–253; it reads LILLVVIVFFLFWTPYNVMIF. The Extracellular portion of the chain corresponds to 254 to 277; sequence LETLKLYGFFPNCDMKRDLRLALS. A helical membrane pass occupies residues 278 to 298; that stretch reads VTETVAFSHCCLNPLIYAFAG. At 299 to 356 the chain is on the cytoplasmic side; the sequence is QKFRRYLRHLSRKCQAVLCGRPVHVSFSPSESQRSRQESIVSSNFTHYTSDGDASLLL. Threonine 347 is modified (phosphothreonine).

It belongs to the G-protein coupled receptor 1 family. In terms of assembly, found in a ternary complex with CX3CL1 and ITGAV:ITGB3 or ITGA4:ITGB1. Post-translationally, this protein is not N-glycosylated which is unusual for G-protein-coupled receptors.

It localises to the cell membrane. Receptor for the C-X3-C chemokine fractalkine (CX3CL1) present on many early leukocyte cells; CX3CR1-CX3CL1 signaling exerts distinct functions in different tissue compartments, such as immune response, inflammation, cell adhesion and chemotaxis. CX3CR1-CX3CL1 signaling mediates cell migratory functions. Responsible for the recruitment of natural killer (NK) cells to inflamed tissues. Acts as a regulator of inflammation process leading to atherogenesis by mediating macrophage and monocyte recruitment to inflamed atherosclerotic plaques, promoting cell survival. Involved in airway inflammation by promoting interleukin 2-producing T helper (Th2) cell survival in inflamed lung. Involved in the migration of circulating monocytes to non-inflamed tissues, where they differentiate into macrophages and dendritic cells. Acts as a negative regulator of angiogenesis, probably by promoting macrophage chemotaxis. Plays a key role in brain microglia by regulating inflammatory response in the central nervous system (CNS) and regulating synapse maturation. Required to restrain the microglial inflammatory response in the CNS and the resulting parenchymal damage in response to pathological stimuli. Involved in brain development by participating in synaptic pruning, a natural process during which brain microglia eliminates extra synapses during postnatal development. Synaptic pruning by microglia is required to promote the maturation of circuit connectivity during brain development. Acts as an important regulator of the gut microbiota by controlling immunity to intestinal bacteria and fungi. Expressed in lamina propria dendritic cells in the small intestine, which form transepithelial dendrites capable of taking up bacteria in order to provide defense against pathogenic bacteria. Required to initiate innate and adaptive immune responses against dissemination of commensal fungi (mycobiota) component of the gut: expressed in mononuclear phagocytes (MNPs) and acts by promoting induction of antifungal IgG antibodies response to confer protection against disseminated C.albicans or C.auris infection. Also acts as a receptor for C-C motif chemokine CCL26, inducing cell chemotaxis. The protein is CX3C chemokine receptor 1 of Oryctolagus cuniculus (Rabbit).